Here is a 428-residue protein sequence, read N- to C-terminus: C4-dicarboxylate transport protein (428 aa).

A run of 9 helical transmembrane segments spans residues Ser-4–Gly-24, Leu-44–Met-64, Val-76–Val-96, Ile-142–Phe-162, Val-184–Met-204, Leu-222–Ala-242, Val-289–Leu-309, Ile-326–Val-346, and Ile-352–Ile-372.

It belongs to the dicarboxylate/amino acid:cation symporter (DAACS) (TC 2.A.23) family.

Its subcellular location is the cell inner membrane. Its function is as follows. Responsible for the transport of dicarboxylates such as succinate, fumarate, and malate from the periplasm across the membrane. The sequence is that of C4-dicarboxylate transport protein from Salmonella gallinarum (strain 287/91 / NCTC 13346).